Reading from the N-terminus, the 347-residue chain is BSD domain-containing protein C22A12.14c (347 aa).

A phosphothreonine mark is found at Thr123 and Thr125. The 53-residue stretch at 167–219 (WEKEISIDGKTEEISLLLEEYPDLRKQMESLVPSEVSYDDFWKRFFWHKEVVQ) folds into the BSD domain. The segment at 229 to 347 (DEEEIFSWGD…DDDEDDDDWE (119 aa)) is disordered. 3 positions are modified to phosphoserine: Ser235, Ser241, and Ser246. The span at 240 to 251 (RSDEEESDNEQV) shows a compositional bias: acidic residues. A compositionally biased stretch (basic and acidic residues) spans 297-312 (HDGEVDGEVKEEEENK). The span at 313-325 (VSSSSNIEASQSS) shows a compositional bias: low complexity. The segment covering 327–337 (EVKDEANRKVD) has biased composition (basic and acidic residues). Residues 338 to 347 (DDDEDDDDWE) show a composition bias toward acidic residues.

The protein resides in the cytoplasm. The sequence is that of BSD domain-containing protein C22A12.14c from Schizosaccharomyces pombe (strain 972 / ATCC 24843) (Fission yeast).